A 175-amino-acid polypeptide reads, in one-letter code: Peptide deformylase (175 aa).

Residues Cys-96 and His-138 each contribute to the Fe cation site. Glu-139 is an active-site residue. Fe cation is bound at residue His-142.

The protein belongs to the polypeptide deformylase family. Requires Fe(2+) as cofactor.

The enzyme catalyses N-terminal N-formyl-L-methionyl-[peptide] + H2O = N-terminal L-methionyl-[peptide] + formate. In terms of biological role, removes the formyl group from the N-terminal Met of newly synthesized proteins. Requires at least a dipeptide for an efficient rate of reaction. N-terminal L-methionine is a prerequisite for activity but the enzyme has broad specificity at other positions. The polypeptide is Peptide deformylase (Campylobacter jejuni subsp. jejuni serotype O:2 (strain ATCC 700819 / NCTC 11168)).